The primary structure comprises 211 residues: ATP-dependent Clp protease proteolytic subunit (211 aa).

Residue Ser106 is the Nucleophile of the active site. The active site involves His131.

The protein belongs to the peptidase S14 family. As to quaternary structure, fourteen ClpP subunits assemble into 2 heptameric rings which stack back to back to give a disk-like structure with a central cavity, resembling the structure of eukaryotic proteasomes.

The protein localises to the cytoplasm. The catalysed reaction is Hydrolysis of proteins to small peptides in the presence of ATP and magnesium. alpha-casein is the usual test substrate. In the absence of ATP, only oligopeptides shorter than five residues are hydrolyzed (such as succinyl-Leu-Tyr-|-NHMec, and Leu-Tyr-Leu-|-Tyr-Trp, in which cleavage of the -Tyr-|-Leu- and -Tyr-|-Trp bonds also occurs).. Cleaves peptides in various proteins in a process that requires ATP hydrolysis. Has a chymotrypsin-like activity. Plays a major role in the degradation of misfolded proteins. The polypeptide is ATP-dependent Clp protease proteolytic subunit (Maricaulis maris (strain MCS10) (Caulobacter maris)).